The primary structure comprises 365 residues: Ribosomal RNA large subunit methyltransferase F (365 aa).

Residues Met-1–Ala-50 are disordered. Basic and acidic residues predominate over residues Ala-33–Ala-50.

The protein belongs to the methyltransferase superfamily. METTL16/RlmF family.

It is found in the cytoplasm. The enzyme catalyses adenosine(1618) in 23S rRNA + S-adenosyl-L-methionine = N(6)-methyladenosine(1618) in 23S rRNA + S-adenosyl-L-homocysteine + H(+). Functionally, specifically methylates the adenine in position 1618 of 23S rRNA. The polypeptide is Ribosomal RNA large subunit methyltransferase F (Shewanella baltica (strain OS195)).